The following is a 134-amino-acid chain: Ribosome-binding factor A (134 aa).

The protein belongs to the RbfA family. As to quaternary structure, monomer. Binds 30S ribosomal subunits, but not 50S ribosomal subunits or 70S ribosomes.

The protein resides in the cytoplasm. In terms of biological role, one of several proteins that assist in the late maturation steps of the functional core of the 30S ribosomal subunit. Associates with free 30S ribosomal subunits (but not with 30S subunits that are part of 70S ribosomes or polysomes). Required for efficient processing of 16S rRNA. May interact with the 5'-terminal helix region of 16S rRNA. The sequence is that of Ribosome-binding factor A from Synechococcus sp. (strain CC9311).